Consider the following 2179-residue polypeptide: FRAS1-related extracellular matrix protein 1 (2179 aa).

A signal peptide spans 1–21 (MNSLSWGAANAVLLLLLLAWA). The Cell attachment site motif lies at 199-201 (RGD). CSPG repeat units lie at residues 296-390 (KAAF…LEVY), 413-500 (APRV…FRIF), and 521-615 (PPFL…FVLW). Residue N335 is glycosylated (N-linked (GlcNAc...) asparagine). N-linked (GlcNAc...) asparagine glycans are attached at residues N560 and N622. CSPG repeat units follow at residues 642–754 (KEAP…FSVS), 776–867 (QVPE…LEVT), and 887–982 (EPPV…LVVS). Residue N1014 is glycosylated (N-linked (GlcNAc...) asparagine). CSPG repeat units follow at residues 1024-1126 (PPSI…VYVT), 1147-1254 (EAPD…IQLS), 1275-1372 (KPML…FYLW), 1393-1485 (GDIV…FIIS), 1506-1596 (LPVV…FMAT), and 1628-1724 (PRIT…FQIM). N-linked (GlcNAc...) asparagine glycosylation is present at N1566. A Calx-beta domain is found at 1731–1830 (ATPQILELKW…DDEVFEVILN (100 aa)). The Cell attachment site motif lies at 1907 to 1909 (RGD). A C-type lectin domain is found at 2060 to 2174 (HSGYCHILIT…CRRAKPHNYV (115 aa)). A disulfide bridge links C2151 with C2165.

It belongs to the FRAS1 family. Interacts with FREM2.

It localises to the secreted. The protein localises to the extracellular space. The protein resides in the extracellular matrix. Its subcellular location is the basement membrane. Functionally, extracellular matrix protein that plays a role in epidermal differentiation and is required for epidermal adhesion during embryonic development. The polypeptide is FRAS1-related extracellular matrix protein 1 (Homo sapiens (Human)).